The following is a 181-amino-acid chain: MSKAIKQNLADSKKMSAELFCLTYGAMVTEMLKDYEDPKDVTIQLDKMGFNMGTRLADDFLAKNANVPRCVDTRQIADVLCRNAIPCYLGISATASSWTSGDREFTITLEANPLTELVQVPAHLVSAGLSYSQLIAGAIRGALEAVHFKVYASATDTGANTEIRIRFDQVLKDSLPAGEDD.

Residue cysteine 70 is the site of S-palmitoyl cysteine attachment.

Belongs to the TRAPP small subunits family. BET3 subfamily. Homodimer. Part of the multisubunit TRAPP (transport protein particle) complex.

Its subcellular location is the golgi apparatus. The protein localises to the cis-Golgi network. The protein resides in the endoplasmic reticulum. Its function is as follows. May play a role in vesicular transport from endoplasmic reticulum to Golgi. Required for the systemic spread of the RNAi response. The chain is Trafficking protein particle complex subunit 3 homolog (trpp-3) from Caenorhabditis elegans.